The sequence spans 284 residues: RNase adapter protein RapZ (284 aa).

8 to 15 is an ATP binding site; that stretch reads GRSGSGKS. 56 to 59 provides a ligand contact to GTP; that stretch reads DVRN. Positions 266–284 are RNA-binding; sequence RSRGKNVQSRHRTLEKRKP.

It belongs to the RapZ-like family. RapZ subfamily. Homotrimer.

Functionally, modulates the synthesis of GlmS, by affecting the processing and stability of the regulatory small RNA GlmZ. When glucosamine-6-phosphate (GlcN6P) concentrations are high in the cell, RapZ binds GlmZ and targets it to cleavage by RNase E. Consequently, GlmZ is inactivated and unable to activate GlmS synthesis. Under low GlcN6P concentrations, RapZ is sequestered and inactivated by an other regulatory small RNA, GlmY, preventing GlmZ degradation and leading to synthesis of GlmS. The chain is RNase adapter protein RapZ from Shigella boydii serotype 18 (strain CDC 3083-94 / BS512).